Reading from the N-terminus, the 366-residue chain is Homer protein homolog 1 (366 aa).

The residue at position 2 (Gly-2) is an N-acetylglycine. Residues 2 to 110 (GEQPIFSTRA…EKFQEFKEAA (109 aa)) form the WH1 domain. The segment at 114–189 (KEKSQEKMEL…RTQALSHASS (76 aa)) is disordered. Composition is skewed to polar residues over residues 138-147 (SPLTPESING) and 155-170 (DVTQNSEPRAEPTQNA). Residues 193-364 (KHWEAELATL…LRDNLAKLLE (172 aa)) are a coiled coil. The tract at residues 302–366 (KLQEVEIRNK…DNLAKLLECS (65 aa)) is required for tetramerization. Ser-318 is modified (phosphoserine).

Belongs to the Homer family. Tetramer; this tetrameric structure is critical for forming the high-order complex with SHANK1, which in turn is necessary for the structural and functional integrity of dendritic spines. Isoform 1, isoform 2 and isoform 3 encode a coiled-coil structure that mediates homo- and heteromultimerization. Interacts with GRM1, GRM5, ITPR1, DNM3, RYR1, RYR2 and SHANK3. Interacts with IFT57 and OPHN1. Interacts with SHANK1; forms high-order polymerized complex with a mesh-like network structure, at least composed of SHANK1, HOMER1 and DLGAP1; the complex formation is SHANK1 multimerization dependent. Interacts with NFATC4. Interacts with DAGLA (via PPXXF motif); this interaction is required for the cell membrane localization of DAGLA. Interacts with SRGAP2. Expressed in skeletal muscle at the level of the Z line, in the forebrain and cerebellum. In terms of tissue distribution, expressed in cardiac and skeletal muscle. As to expression, expressed in the hippocampus. Expressed in skeletal muscle at the level of the Z line, in the heart, forebrain and cerebellum.

It is found in the cytoplasm. It localises to the postsynaptic density. The protein resides in the synapse. Its subcellular location is the cell projection. The protein localises to the dendritic spine. Its function is as follows. Postsynaptic density scaffolding protein. Binds and cross-links cytoplasmic regions of GRM1, GRM5, ITPR1, DNM3, RYR1, RYR2, SHANK1 and SHANK3. By physically linking GRM1 and GRM5 with ER-associated ITPR1 receptors, it aids the coupling of surface receptors to intracellular calcium release. May also couple GRM1 to PI3 kinase through its interaction with AGAP2. Isoform 1 regulates the trafficking and surface expression of GRM5. Differentially regulates the functions of the calcium activated channel ryanodine receptors RYR1 and RYR2. Isoform 1 decreases the activity of RYR2, and increases the activity of RYR1, whereas isoform 5 counteracts the effects by competing for binding sites. Isoform 3 regulates the trafficking and surface expression of GRM5. Isoform 5 acts as a natural dominant negative, in dynamic competition with constitutively expressed isoform 1, isoform 2 and isoform 3 to regulate synaptic metabotropic glutamate function. Isoform 5, may be involved in the structural changes that occur at synapses during long-lasting neuronal plasticity and development. Forms a high-order complex with SHANK1, which in turn is necessary for the structural and functional integrity of dendritic spines. Negatively regulates T cell activation by inhibiting the calcineurin-NFAT pathway. Acts by competing with calcineurin/PPP3CA for NFAT protein binding, hence preventing NFAT activation by PPP3CA. This is Homer protein homolog 1 from Mus musculus (Mouse).